A 216-amino-acid chain; its full sequence is 3-isopropylmalate dehydratase small subunit (216 aa).

It belongs to the LeuD family. LeuD type 1 subfamily. As to quaternary structure, heterodimer of LeuC and LeuD.

It catalyses the reaction (2R,3S)-3-isopropylmalate = (2S)-2-isopropylmalate. Its pathway is amino-acid biosynthesis; L-leucine biosynthesis; L-leucine from 3-methyl-2-oxobutanoate: step 2/4. Catalyzes the isomerization between 2-isopropylmalate and 3-isopropylmalate, via the formation of 2-isopropylmaleate. The sequence is that of 3-isopropylmalate dehydratase small subunit from Burkholderia thailandensis (strain ATCC 700388 / DSM 13276 / CCUG 48851 / CIP 106301 / E264).